We begin with the raw amino-acid sequence, 642 residues long: Voltage-gated potassium channel KCNC2 (642 aa).

Residues 1 to 233 (MGKIESNERV…EDPYSSRAAR (233 aa)) lie on the Cytoplasmic side of the membrane. The interval 45-98 (DCLTAAGDKLQPLPPPLSPPPRPPPLSPVPSGCFEGGAGNCSSHGGNGGNGGSD) is disordered. The span at 56 to 72 (PLPPPLSPPPRPPPLSP) shows a compositional bias: pro residues. Over residues 78–98 (FEGGAGNCSSHGGNGGNGGSD) the composition is skewed to gly residues. 4 residues coordinate Zn(2+): His128, Cys134, Cys155, and Cys156. The helical transmembrane segment at 234 to 254 (FIAFASLFFILVSITTFCLET) threads the bilayer. 2 N-linked (GlcNAc...) asparagine glycosylation sites follow: Asn263 and Asn270. A helical membrane pass occupies residues 287-307 (TYVEGVCVVWFTFEFLVRIVF). The Cytoplasmic portion of the chain corresponds to 308–317 (SPNKLEFIKN). Residues 318 to 338 (LLNIIDFVAILPFYLEVGLSG) traverse the membrane as a helical segment. A helical; Voltage-sensor membrane pass occupies residues 350 to 372 (FLRVVRFVRILRIFKLTRHFVGL). The Cytoplasmic segment spans residues 373-385 (RVLGHTLRASTNE). The helical transmembrane segment at 386 to 406 (FLLLIIFLALGVLIFATMIYY) threads the bilayer. Residues Thr441, Leu442, Gly443, and Tyr444 each coordinate K(+). The short motif at 441 to 446 (TLGYGD) is the Selectivity filter element. The chain crosses the membrane as a helical span at residues 457 to 477 (VGALCALAGVLTIAMPVPVIV). Residues 478–642 (NNFGMYYSLA…RSRSPIPSIL (165 aa)) lie on the Cytoplasmic side of the membrane. The segment at 542 to 576 (SVLSGDDSTGSEPPLSPPERLPIRRSSTRDKNRRG) is disordered. Ser604 carries the post-translational modification Phosphoserine.

Belongs to the potassium channel family. C (Shaw) (TC 1.A.1.2) subfamily. Kv3.2/KCNC2 sub-subfamily. Homotetramer and heterotetramer with other channel-forming alpha subunits, such as KCNC1. Interacts with KCNC1. Homotetramer or heterotetramer channel activity is regulated by association with modulating ancillary subunits such as KCNE1, KCNE2 and KCNE3, creating a functionally diverse range of channel complexes. Interacts with KCNE1, KCNE2 and KCNE3. Post-translationally, phosphorylated by PKA in cortical synaptosomes. cAMP-dependent phosphorylation inhibits channel activity. Histamine H2 receptor- and PKA-induced phosphorylation extends action potential spike duration, reduces action potential spike amplitude, sustains maximum firing frequency in hippocampal interneurons; also reduces the incidence of high-frequency oscillations in hippocampal CA3 pyramidal cell layers. In terms of tissue distribution, weakly expressed in the brain at postnatal age day 7 (P7) and increased at P60. Not detectable in newborn hippocampus. Expressed weakly at P7 in the early developing hippocampus, increasing progressively and reaching a plateau of expression at P14 that is maintained throughout P51. Expressed in paravalbumin- and somatostain-containing inhibitory interneurons of the hippocampus; in the CA1/CA3 stratum oriens-alveus and stratum pyramidale and in cells within the hilus and subgranular layer of the dentate gyrus (DG). Strongly expressed in parvalbumin (PV)-containing fast-spiking GABAergic inhibitor interneurons in deep cortical layers V and VI. Also expressed in non-fast-spiking calbindin (CB)- and/or somatostatin (SOM)-containing interneurons in deep cortical layers V and VI. Expressed in starburst amacrine cells of the retina in the inner nuclear layer (INL) and ganglion cell layer (GCL). Expressed in the suprachiasmatic nucleus (SCN) (at protein level). Expressed in the early developing brain, increasing progressively until P14.

The protein localises to the cell membrane. It localises to the membrane. The protein resides in the perikaryon. Its subcellular location is the cell projection. It is found in the axon. The protein localises to the dendrite. It localises to the postsynaptic cell membrane. The protein resides in the presynaptic cell membrane. Its subcellular location is the synapse. It is found in the synaptosome. The protein localises to the apical cell membrane. It localises to the basolateral cell membrane. It carries out the reaction K(+)(in) = K(+)(out). Inhibited by millimolar levels of tetraethylammonium (TEA). Contrary to other channels, inhibited only by millimolar levels of 4-aminopyridine (4-AP). Inhibited by Stichodactyla helianthus peptide ShK. Its function is as follows. Voltage-gated potassium channel that mediates transmembrane potassium transport in excitable membranes, primarily in the brain. Contributes to the regulation of the fast action potential repolarization and in sustained high-frequency firing in neurons of the central nervous system. Homotetramer channels mediate delayed-rectifier voltage-dependent potassium currents that activate rapidly at high-threshold voltages and inactivate slowly. Forms tetrameric channels through which potassium ions pass in accordance with their electrochemical gradient. The channel alternates between opened and closed conformations in response to the voltage difference across the membrane. Can form functional homotetrameric and heterotetrameric channels that contain variable proportions of KCNC1, and possibly other family members as well; channel properties depend on the type of alpha subunits that are part of the channel. Channel properties may be modulated by either the association with ancillary subunits, such as KCNE1, KCNE2 and KCNE3 or indirectly by nitric oxide (NO) through a cGMP- and PKG-mediated signaling cascade, slowing channel activation and deactivation of delayed rectifier potassium channels. Contributes to fire sustained trains of very brief action potentials at high frequency in thalamocortical and suprachiasmatic nucleus (SCN) neurons, in hippocampal and neocortical interneurons and in retinal ganglion cells. Sustained maximal action potential firing frequency in inhibitory hippocampal interneurons is negatively modulated by histamine H2 receptor activation in a cAMP- and protein kinase (PKA) phosphorylation-dependent manner. Plays a role in maintaining the fidelity of synaptic transmission in neocortical GABAergic interneurons by generating action potential (AP) repolarization at nerve terminals, thus reducing spike-evoked calcium influx and GABA neurotransmitter release. Required for long-range synchronization of gamma oscillations over distance in the neocortex. Contributes to the modulation of the circadian rhythm of spontaneous action potential firing in suprachiasmatic nucleus (SCN) neurons in a light-dependent manner. This Mus musculus (Mouse) protein is Voltage-gated potassium channel KCNC2.